A 741-amino-acid polypeptide reads, in one-letter code: Eukaryotic peptide chain release factor GTP-binding subunit (741 aa).

Residues 5–135 (QQQQQQFNAN…SYNNNNNYNN (131 aa)) are several sort of repeats. Positions 59–161 (QQFGQYGQQQ…DQQQETGSGQ (103 aa)) are enriched in low complexity. Disordered stretches follow at residues 59–186 (QQFG…KKVL) and 199–264 (IVTK…KTEA). Residues 162–311 (MSLEDYQKQQ…EQIDASIVND (150 aa)) form a charged region. Composition is skewed to basic and acidic residues over residues 166-175 (DYQKQQKESL) and 202-241 (KKKE…ESKV). A tr-type G domain is found at 316-541 (KDHMSIIFMG…YLDSMPLAVR (226 aa)). The segment at 325 to 332 (GHVDAGKS) is G1. Position 325–332 (325–332 (GHVDAGKS)) interacts with GTP. The segment at 381-385 (GKTIE) is G2. Phosphothreonine is present on threonine 399. The G3 stretch occupies residues 402–405 (DAPG). Residues 402 to 406 (DAPGH) and 464 to 467 (NKMD) each bind GTP. The interval 464 to 467 (NKMD) is G4. Positions 505–507 (SGY) are G5.

The protein belongs to the TRAFAC class translation factor GTPase superfamily. Classic translation factor GTPase family. ERF3 subfamily.

It is found in the cytoplasm. Involved in translation termination. Stimulates the activity of ERF1. Binds guanine nucleotides. The protein is Eukaryotic peptide chain release factor GTP-binding subunit (SUP2) of Ogataea pini (Yeast).